A 139-amino-acid chain; its full sequence is MSSEKEYVEMLDRLYSKLPEKGRKEGTQALPNLIIFNIGNTTMIRNFAEYCDRIRREDKICMKYLLKELAAPGNVDDKGELIIQGKFSSQVINTLMERFLKAYVECSTCKSLDTVLKKEKKSWYIVCLACGAQTPVKPL.

This sequence belongs to the eIF-2-beta/eIF-5 family. In terms of assembly, heterotrimer composed of an alpha, a beta and a gamma chain.

In terms of biological role, eIF-2 functions in the early steps of protein synthesis by forming a ternary complex with GTP and initiator tRNA. This chain is Translation initiation factor 2 subunit beta, found in Saccharolobus islandicus (strain Y.N.15.51 / Yellowstone #2) (Sulfolobus islandicus).